Consider the following 174-residue polypeptide: Disulfide bond formation protein B (174 aa).

At 1–14 the chain is on the cytoplasmic side; that stretch reads MLHIFYIYSKSRKF. Residues 15-31 traverse the membrane as a helical segment; it reads WAILICSSISLISIALL. Topologically, residues 32-49 are periplasmic; it reads NQFFFLLKPCILCIYQRC. Residues Cys41 and Cys44 are joined by a disulfide bond. Residues 50–65 form a helical membrane-spanning segment; that stretch reads SLFGITIAGLIALISP. Residues 66–72 are Cytoplasmic-facing; it reads KTTLLRL. Residues 73–90 traverse the membrane as a helical segment; it reads FSIFIWLYSAIKGLYFSN. Residues 91–146 lie on the Periplasmic side of the membrane; that stretch reads IHMQTTLHPSSSLTCDLFVSFPNWLPLNKWYPIIFDSKISNCYSYPQYLLYLEISQ. A disulfide bridge links Cys105 with Cys132. Residues 147–165 form a helical membrane-spanning segment; it reads WMLLFFLIYLIIAIFTIIS. Residues 166-174 lie on the Cytoplasmic side of the membrane; the sequence is QCHNLFQKK.

Belongs to the DsbB family.

The protein resides in the cell inner membrane. In terms of biological role, required for disulfide bond formation in some periplasmic proteins. Acts by oxidizing the DsbA protein. The protein is Disulfide bond formation protein B of Blochmanniella floridana.